Here is a 390-residue protein sequence, read N- to C-terminus: Transforming growth factor beta-1 proprotein (390 aa).

An N-terminal signal peptide occupies residues 1–29; that stretch reads MPPSGLRLLPLLLPLLWLLVLTPSRPAAG. Positions 30-74 are straightjacket domain; it reads LSTCKTIDMELVKRKRIETIRGQILSKLRLASPPSQGEVPPGPLP. The interval 75–271 is arm domain; it reads EAVLALYNST…ATPLERAQHL (197 aa). N-linked (GlcNAc...) asparagine glycosylation is found at N82, N136, and N176. Residues 226 to 252 are bowtie tail; it reads DSKDNTLQVDINGFTTGRRGDLATIHG. A Cell attachment site motif is present at residues 244–246; that stretch reads RGD. 4 disulfides stabilise this stretch: C285–C294, C293–C356, C322–C387, and C326–C389.

The protein belongs to the TGF-beta family. In terms of assembly, homodimer; disulfide-linked. Interacts with the serine proteases, HTRA1 and HTRA3: the interaction with either inhibits TGFB1-mediated signaling and the HTRA protease activity is required for this inhibition. May interact with THSD4; this interaction may lead to sequestration by FBN1 microfibril assembly and attenuation of TGFB signaling. Interacts with CD109, DPT and ASPN. Interacts with EFEMP2. Interacts with TSKU; the interaction contributes to regulation of the hair cycle. Interacts with TGFBR3. As to quaternary structure, homodimer; disulfide-linked. Interacts with transforming growth factor beta-1 (TGF-beta-1) chain; interaction is non-covalent and maintains TGF-beta-1 in a latent state; each latency-associated peptide (LAP) monomer interacts with TGF-beta-1 in the other monomer. Interacts with LTBP1; leading to regulation of TGF-beta-1 activation. Interacts with LRRC32/GARP; leading to regulation of TGF-beta-1 activation on the surface of activated regulatory T-cells (Tregs). Interacts with LRRC33/NRROS; leading to regulation of TGF-beta-1 activation in macrophages and microglia. Interacts (via cell attachment site) with integrins ITGAV and ITGB6 (ITGAV:ITGB6), leading to release of the active TGF-beta-1. Interacts with NREP; the interaction results in a decrease in TGFB1 autoinduction. Interacts with HSP90AB1; inhibits latent TGFB1 activation. Homodimer; disulfide-linked. Interacts with TGF-beta receptors (TGFBR1 and TGFBR2), leading to signal transduction. Post-translationally, transforming growth factor beta-1 proprotein: The precursor proprotein is cleaved in the Golgi apparatus by FURIN to form Transforming growth factor beta-1 (TGF-beta-1) and Latency-associated peptide (LAP) chains, which remain non-covalently linked, rendering TGF-beta-1 inactive. N-glycosylated. Deglycosylation leads to activation of Transforming growth factor beta-1 (TGF-beta-1); mechanisms triggering deglycosylation-driven activation of TGF-beta-1 are however unclear.

The protein localises to the secreted. It is found in the extracellular space. Its subcellular location is the extracellular matrix. Transforming growth factor beta-1 proprotein: Precursor of the Latency-associated peptide (LAP) and Transforming growth factor beta-1 (TGF-beta-1) chains, which constitute the regulatory and active subunit of TGF-beta-1, respectively. Functionally, required to maintain the Transforming growth factor beta-1 (TGF-beta-1) chain in a latent state during storage in extracellular matrix. Associates non-covalently with TGF-beta-1 and regulates its activation via interaction with 'milieu molecules', such as LTBP1, LRRC32/GARP and LRRC33/NRROS, that control activation of TGF-beta-1. Interaction with LRRC33/NRROS regulates activation of TGF-beta-1 in macrophages and microglia. Interaction with LRRC32/GARP controls activation of TGF-beta-1 on the surface of activated regulatory T-cells (Tregs). Interaction with integrins (ITGAV:ITGB6 or ITGAV:ITGB8) results in distortion of the Latency-associated peptide chain and subsequent release of the active TGF-beta-1. In terms of biological role, multifunctional protein that regulates the growth and differentiation of various cell types and is involved in various processes, such as normal development, immune function, microglia function and responses to neurodegeneration. Activation into mature form follows different steps: following cleavage of the proprotein in the Golgi apparatus, Latency-associated peptide (LAP) and Transforming growth factor beta-1 (TGF-beta-1) chains remain non-covalently linked rendering TGF-beta-1 inactive during storage in extracellular matrix. At the same time, LAP chain interacts with 'milieu molecules', such as LTBP1, LRRC32/GARP and LRRC33/NRROS that control activation of TGF-beta-1 and maintain it in a latent state during storage in extracellular milieus. TGF-beta-1 is released from LAP by integrins (ITGAV:ITGB6 or ITGAV:ITGB8): integrin-binding to LAP stabilizes an alternative conformation of the LAP bowtie tail and results in distortion of the LAP chain and subsequent release of the active TGF-beta-1. Once activated following release of LAP, TGF-beta-1 acts by binding to TGF-beta receptors (TGFBR1 and TGFBR2), which transduce signal. While expressed by many cells types, TGF-beta-1 only has a very localized range of action within cell environment thanks to fine regulation of its activation by Latency-associated peptide chain (LAP) and 'milieu molecules'. Plays an important role in bone remodeling: acts as a potent stimulator of osteoblastic bone formation, causing chemotaxis, proliferation and differentiation in committed osteoblasts. Can promote either T-helper 17 cells (Th17) or regulatory T-cells (Treg) lineage differentiation in a concentration-dependent manner. At high concentrations, leads to FOXP3-mediated suppression of RORC and down-regulation of IL-17 expression, favoring Treg cell development. At low concentrations in concert with IL-6 and IL-21, leads to expression of the IL-17 and IL-23 receptors, favoring differentiation to Th17 cells. Stimulates sustained production of collagen through the activation of CREB3L1 by regulated intramembrane proteolysis (RIP). Mediates SMAD2/3 activation by inducing its phosphorylation and subsequent translocation to the nucleus. Positively regulates odontoblastic differentiation in dental papilla cells, via promotion of IPO7-mediated translocation of phosphorylated SMAD2 to the nucleus and subsequent transcription of target genes. Can induce epithelial-to-mesenchymal transition (EMT) and cell migration in various cell types. The sequence is that of Transforming growth factor beta-1 proprotein (TGFB1) from Chlorocebus aethiops (Green monkey).